Reading from the N-terminus, the 353-residue chain is uncharacterized protein (353 aa).

Residues glycine 267–cysteine 287 form a helical membrane-spanning segment.

This sequence belongs to the glycosyltransferase group 1 family. Glycosyltransferase 4 subfamily.

It is found in the membrane. This is an uncharacterized protein from Haemophilus influenzae (strain ATCC 51907 / DSM 11121 / KW20 / Rd).